The chain runs to 306 residues: Protein translocase subunit SecF (306 aa).

6 consecutive transmembrane segments (helical) span residues 17-37 (AFAV…TKGI), 134-154 (GLGM…RFQW), 158-178 (LGAI…LSFF), 185-205 (TVLA…IVIF), 232-254 (LLRT…FFGG), and 268-288 (VMAG…WLNL).

It belongs to the SecD/SecF family. SecF subfamily. As to quaternary structure, forms a complex with SecD. Part of the essential Sec protein translocation apparatus which comprises SecA, SecYEG and auxiliary proteins SecDF-YajC and YidC.

It localises to the cell inner membrane. Part of the Sec protein translocase complex. Interacts with the SecYEG preprotein conducting channel. SecDF uses the proton motive force (PMF) to complete protein translocation after the ATP-dependent function of SecA. The chain is Protein translocase subunit SecF from Pseudomonas aeruginosa (strain ATCC 15692 / DSM 22644 / CIP 104116 / JCM 14847 / LMG 12228 / 1C / PRS 101 / PAO1).